A 437-amino-acid chain; its full sequence is Cobyrinate a,c-diamide synthase (437 aa).

The region spanning 241–430 (KIAVAKDEAF…AHVHFFGNLD (190 aa)) is the GATase cobBQ-type domain. Catalysis depends on Cys323, which acts as the Nucleophile.

Belongs to the CobB/CbiA family. It depends on Mg(2+) as a cofactor.

The catalysed reaction is cob(II)yrinate + 2 L-glutamine + 2 ATP + 2 H2O = cob(II)yrinate a,c diamide + 2 L-glutamate + 2 ADP + 2 phosphate + 2 H(+). The protein operates within cofactor biosynthesis; adenosylcobalamin biosynthesis; cob(II)yrinate a,c-diamide from sirohydrochlorin (anaerobic route): step 10/10. Catalyzes the ATP-dependent amidation of the two carboxylate groups at positions a and c of cobyrinate, using either L-glutamine or ammonia as the nitrogen source. The protein is Cobyrinate a,c-diamide synthase of Clostridium acetobutylicum (strain ATCC 824 / DSM 792 / JCM 1419 / IAM 19013 / LMG 5710 / NBRC 13948 / NRRL B-527 / VKM B-1787 / 2291 / W).